We begin with the raw amino-acid sequence, 432 residues long: Ribosome biogenesis protein WDR12 homolog (432 aa).

Residues 13–97 form a ubiquitin-like (UBL) domain region; sequence LQIRLVALNK…ESVIEVVYFQ (85 aa). WD repeat units lie at residues 109-146, 148-190, 197-236, 265-303, 305-345, 352-392, and 396-432; these read LHSD…YAIF, GHES…KSVE, GHTQ…KDDD, GHTD…NKSD, NVNK…DQTV, SHKN…APLY, and GHED…AQRS.

It belongs to the WD repeat WDR12/YTM1 family.

Its subcellular location is the nucleus. The protein resides in the nucleolus. It is found in the nucleoplasm. Functionally, required for maturation of ribosomal RNAs and formation of the large ribosomal subunit. The sequence is that of Ribosome biogenesis protein WDR12 homolog from Trichoplax adhaerens (Trichoplax reptans).